Reading from the N-terminus, the 689-residue chain is Elongation factor G (689 aa).

The 275-residue stretch at 9 to 283 (AKFRNIGIMA…AIVEFMPSPL (275 aa)) folds into the tr-type G domain. Residues 18-25 (AHIDAGKT), 82-86 (DTPGH), and 136-139 (NKMD) contribute to the GTP site.

The protein belongs to the TRAFAC class translation factor GTPase superfamily. Classic translation factor GTPase family. EF-G/EF-2 subfamily.

Its subcellular location is the cytoplasm. In terms of biological role, catalyzes the GTP-dependent ribosomal translocation step during translation elongation. During this step, the ribosome changes from the pre-translocational (PRE) to the post-translocational (POST) state as the newly formed A-site-bound peptidyl-tRNA and P-site-bound deacylated tRNA move to the P and E sites, respectively. Catalyzes the coordinated movement of the two tRNA molecules, the mRNA and conformational changes in the ribosome. This chain is Elongation factor G, found in Clostridium botulinum (strain Kyoto / Type A2).